A 540-amino-acid chain; its full sequence is CTP synthase (540 aa).

An amidoligase domain region spans residues Met-1 to Lys-264. A CTP-binding site is contributed by Ser-12. Ser-12 contacts UTP. Gly-13 to Thr-18 serves as a coordination point for ATP. Tyr-53 lines the L-glutamine pocket. An ATP-binding site is contributed by Asp-70. 2 residues coordinate Mg(2+): Asp-70 and Glu-140. CTP-binding positions include Asp-147–Glu-149, Lys-185–Gln-190, and Arg-221. UTP-binding positions include Lys-185–Gln-190 and Arg-221. The region spanning Tyr-294 to Asn-527 is the Glutamine amidotransferase type-1 domain. Gly-347 serves as a coordination point for L-glutamine. Cys-374 (nucleophile; for glutamine hydrolysis) is an active-site residue. L-glutamine contacts are provided by residues Leu-375–Gln-378, Glu-398, and Arg-455. Active-site residues include His-500 and Glu-502.

The protein belongs to the CTP synthase family. In terms of assembly, homotetramer.

It catalyses the reaction UTP + L-glutamine + ATP + H2O = CTP + L-glutamate + ADP + phosphate + 2 H(+). The enzyme catalyses L-glutamine + H2O = L-glutamate + NH4(+). The catalysed reaction is UTP + NH4(+) + ATP = CTP + ADP + phosphate + 2 H(+). The protein operates within pyrimidine metabolism; CTP biosynthesis via de novo pathway; CTP from UDP: step 2/2. Its activity is regulated as follows. Allosterically activated by GTP, when glutamine is the substrate; GTP has no effect on the reaction when ammonia is the substrate. The allosteric effector GTP functions by stabilizing the protein conformation that binds the tetrahedral intermediate(s) formed during glutamine hydrolysis. Inhibited by the product CTP, via allosteric rather than competitive inhibition. Its function is as follows. Catalyzes the ATP-dependent amination of UTP to CTP with either L-glutamine or ammonia as the source of nitrogen. Regulates intracellular CTP levels through interactions with the four ribonucleotide triphosphates. The sequence is that of CTP synthase from Thermoplasma volcanium (strain ATCC 51530 / DSM 4299 / JCM 9571 / NBRC 15438 / GSS1).